A 177-amino-acid polypeptide reads, in one-letter code: Large ribosomal subunit protein uL6 (177 aa).

The protein belongs to the universal ribosomal protein uL6 family. As to quaternary structure, part of the 50S ribosomal subunit.

In terms of biological role, this protein binds to the 23S rRNA, and is important in its secondary structure. It is located near the subunit interface in the base of the L7/L12 stalk, and near the tRNA binding site of the peptidyltransferase center. The sequence is that of Large ribosomal subunit protein uL6 from Neisseria gonorrhoeae (strain ATCC 700825 / FA 1090).